The primary structure comprises 318 residues: MHQEQNKIIKILFSEYYEKAELDLPNDMELREFAYQPFDSETYVRHLSFSSPQELRQYILQNVPLHLYYSSARYQLPSAKEMDEKGWLGSDLLFDLDADEICEVKVRRFCPQDGYETLASNCNGEPPIEYAEITTECIMKVFEKALLIRDILKEDFGLNARIFFSGNRGFHLRVTCYEDCALLDPDDRKEIAEYFTSPKPPVIYEGNPGWSGRIAKGIEGINIDTQVTIDIRRLVRIPGSLNGKAGLMVVEIKNDKFEYGEWLSPFDGDCIFLPYVSAELTLFNNKYTVKRTYPIKIDTRIGVYLALKGLGKVKAYVR.

Active-site residues include Asp95, Asp97, and Asp224.

This sequence belongs to the eukaryotic-type primase small subunit family. As to quaternary structure, heterodimer of a small subunit (PriS) and a large subunit (PriL). Mg(2+) is required as a cofactor. Mn(2+) serves as cofactor.

Catalytic subunit of DNA primase, an RNA polymerase that catalyzes the synthesis of short RNA molecules used as primers for DNA polymerase during DNA replication. The small subunit contains the primase catalytic core and has DNA synthesis activity on its own. Binding to the large subunit stabilizes and modulates the activity, increasing the rate of DNA synthesis while decreasing the length of the DNA fragments, and conferring RNA synthesis capability. The DNA polymerase activity may enable DNA primase to also catalyze primer extension after primer synthesis. May also play a role in DNA repair. The protein is DNA primase small subunit PriS of Sulfurisphaera tokodaii (strain DSM 16993 / JCM 10545 / NBRC 100140 / 7) (Sulfolobus tokodaii).